We begin with the raw amino-acid sequence, 257 residues long: UPF0246 protein LPC_0782 (257 aa).

Belongs to the UPF0246 family.

The protein is UPF0246 protein LPC_0782 of Legionella pneumophila (strain Corby).